Reading from the N-terminus, the 351-residue chain is AA9 family lytic polysaccharide monooxygenase A (351 aa).

Residues 1–20 (MSNKAATLLAALSGAALVAA) form the signal peptide. H21 and H107 together coordinate Cu(2+). The cysteines at positions 76 and 196 are disulfide-linked. Residues H182 and Q191 each coordinate O2. Residue Y193 coordinates Cu(2+). The CBM1 domain occupies 315 to 351 (GVAPKWGQCGGNGWTGPTVCASGSTCTVLNPYYSQCI).

It belongs to the polysaccharide monooxygenase AA9 family. The cofactor is Cu(2+).

The protein resides in the secreted. The catalysed reaction is [(1-&gt;4)-beta-D-glucosyl]n+m + reduced acceptor + O2 = 4-dehydro-beta-D-glucosyl-[(1-&gt;4)-beta-D-glucosyl]n-1 + [(1-&gt;4)-beta-D-glucosyl]m + acceptor + H2O.. Its function is as follows. Lytic polysaccharide monooxygenase (LPMO) that depolymerizes crystalline and amorphous polysaccharides via the oxidation of scissile alpha- or beta-(1-4)-glycosidic bonds, yielding C1 and C4 oxidation products. Catalysis by LPMOs requires the reduction of the active-site copper from Cu(II) to Cu(I) by a reducing agent and H(2)O(2) or O(2) as a cosubstrate. This is AA9 family lytic polysaccharide monooxygenase A from Podospora anserina (strain S / ATCC MYA-4624 / DSM 980 / FGSC 10383) (Pleurage anserina).